The primary structure comprises 167 residues: Heme-degrading monooxygenase (167 aa).

The important for catalysis stretch occupies residues M1 to G50. The ABM domain maps to V67–E154.

The protein belongs to the antibiotic biosynthesis monooxygenase family. Monomer.

The protein localises to the cytoplasm. Its function is as follows. Catalyzes the degradation of heme to biliverdin in the presence of a suitable electron donor such as ascorbate, with the subsequent release of iron. Hardly any CO is released by the heme degradation reaction. Binds heme. Allows bacterial pathogens to use the host heme as an iron source. Release of iron from heme may play a crucial role in the pathogenicity of L.monocytogenes. The polypeptide is Heme-degrading monooxygenase (Listeria monocytogenes serovar 1/2a (strain ATCC BAA-679 / EGD-e)).